We begin with the raw amino-acid sequence, 200 residues long: Large ribosomal subunit protein uL4 (200 aa).

Residues 43 to 71 (RAQKTRAEVSGSGKKPWRQKGTGRARSGD) are disordered.

The protein belongs to the universal ribosomal protein uL4 family. In terms of assembly, part of the 50S ribosomal subunit.

Its function is as follows. One of the primary rRNA binding proteins, this protein initially binds near the 5'-end of the 23S rRNA. It is important during the early stages of 50S assembly. It makes multiple contacts with different domains of the 23S rRNA in the assembled 50S subunit and ribosome. Forms part of the polypeptide exit tunnel. This Actinobacillus pleuropneumoniae serotype 5b (strain L20) protein is Large ribosomal subunit protein uL4.